Reading from the N-terminus, the 369-residue chain is Tyrosinase-like protein orsC (369 aa).

The N-terminal stretch at methionine 1–alanine 23 is a signal peptide. Residues histidine 112 and histidine 121 each contribute to the Cu cation site. 4 N-linked (GlcNAc...) asparagine glycosylation sites follow: asparagine 165, asparagine 179, asparagine 253, and asparagine 272. Histidine 315 contacts Cu cation.

The protein operates within secondary metabolite biosynthesis. Tyrosinase-like protein; part of the gene cluster that mediates the biosynthesis of orsellinic acid, as well as of the cathepsin K inhibitors F9775 A and F9775 B. The non-reducing polyketide synthase orsA produces orsellinic acid by condensing acetyl-CoA with 3 malonyl-CoA units. Further modifications by the decarboxylase orsB and the tyrosinase-like protein orsC lead to the production of F9775 A and F9775 B. The functions of orsD and orsE remain unclear since only orsB and orsC are required to convert orsellinic acid into F9775 A and F9775 B. This chain is Tyrosinase-like protein orsC, found in Emericella nidulans (strain FGSC A4 / ATCC 38163 / CBS 112.46 / NRRL 194 / M139) (Aspergillus nidulans).